The sequence spans 163 residues: Cytochrome c-type biogenesis protein CcmE (163 aa).

Residues 1-8 (MNPRRKKR) are Cytoplasmic-facing. Residues 9 to 29 (LTIILAISAGLAAVIGLVLYA) form a helical; Signal-anchor for type II membrane protein membrane-spanning segment. Topologically, residues 30-163 (LSQNIDLFYT…TEAQLKGAKQ (134 aa)) are periplasmic. Heme-binding residues include H131 and Y135.

It belongs to the CcmE/CycJ family.

It is found in the cell inner membrane. In terms of biological role, heme chaperone required for the biogenesis of c-type cytochromes. Transiently binds heme delivered by CcmC and transfers the heme to apo-cytochromes in a process facilitated by CcmF and CcmH. This is Cytochrome c-type biogenesis protein CcmE from Aeromonas salmonicida (strain A449).